Here is a 291-residue protein sequence, read N- to C-terminus: Farnesyl diphosphate synthase (291 aa).

3 residues coordinate isopentenyl diphosphate: Lys44, Arg47, and His76. Asp83 and Asp89 together coordinate Mg(2+). Arg94 is a (2E)-geranyl diphosphate binding site. Arg95 is an isopentenyl diphosphate binding site. Residues Lys177, Thr178, Gln215, and Lys232 each contribute to the (2E)-geranyl diphosphate site.

It belongs to the FPP/GGPP synthase family. It depends on Mg(2+) as a cofactor.

It is found in the cytoplasm. It catalyses the reaction isopentenyl diphosphate + (2E)-geranyl diphosphate = (2E,6E)-farnesyl diphosphate + diphosphate. This is Farnesyl diphosphate synthase (fps) from Micrococcus luteus (Micrococcus lysodeikticus).